Consider the following 532-residue polypeptide: MTKFIFVTGGVVSSLGKGITASALGCLLKNRGLSVAIQKFDPYINIDPGTMSPYQHGEVFVTDDGAETDLDLGHYERFIDVPVSKNSNVTTGKIYWSVLNKERRGDYLGGTVQVIPHITNEIKERIYRVARENHPDIVITEIGGTVGDIESLPYLEAIRQMRSDIGRENVLYLHVTLIPYLNASGELKTKPTQHSVKELRGIGIQPNILVCRTEHAISEDMKEKLALFCDIDREAIIQMVDAKSIYEVPLNILEEGMDDIVLKILGLEAPPADMTDWRAMVDRINNPQSETEIAIVGKYVELPDAYLSVAEALRHAGIEHLAKVKIRWVNSEEIEGSSAAELLKGVSGILVPGGFGNRGIEGKIEAIRYARENKIPFLGICLGMQTAVIEFARNVCGMTNANSSEFDVDAPYPVIDLLPEQKEIEDKGGTMRLGISPVKLIESTLVSSIYQDEVIYERHRHRYEVNNQFRAELEKGGLKFSGTSPDGRLVEITEYPDHPWFVASQFHPEFKSRPYRSHPLFREFVKATLANR.

Residues 1 to 267 (MTKFIFVTGG…DDIVLKILGL (267 aa)) are amidoligase domain. Ser-13 contributes to the CTP binding site. Residue Ser-13 coordinates UTP. 14-19 (SLGKGI) lines the ATP pocket. Tyr-54 lines the L-glutamine pocket. Asp-71 provides a ligand contact to ATP. 2 residues coordinate Mg(2+): Asp-71 and Glu-141. CTP-binding positions include 148 to 150 (DIE), 188 to 193 (KTKPTQ), and Lys-224. UTP is bound by residues 188–193 (KTKPTQ) and Lys-224. One can recognise a Glutamine amidotransferase type-1 domain in the interval 292–532 (EIAIVGKYVE…EFVKATLANR (241 aa)). Residue Gly-354 coordinates L-glutamine. Cys-381 functions as the Nucleophile; for glutamine hydrolysis in the catalytic mechanism. Residues 382 to 385 (LGMQ), Glu-405, and Arg-462 contribute to the L-glutamine site. Active-site residues include His-507 and Glu-509.

The protein belongs to the CTP synthase family. Homotetramer.

The enzyme catalyses UTP + L-glutamine + ATP + H2O = CTP + L-glutamate + ADP + phosphate + 2 H(+). It carries out the reaction L-glutamine + H2O = L-glutamate + NH4(+). It catalyses the reaction UTP + NH4(+) + ATP = CTP + ADP + phosphate + 2 H(+). The protein operates within pyrimidine metabolism; CTP biosynthesis via de novo pathway; CTP from UDP: step 2/2. Its activity is regulated as follows. Allosterically activated by GTP, when glutamine is the substrate; GTP has no effect on the reaction when ammonia is the substrate. The allosteric effector GTP functions by stabilizing the protein conformation that binds the tetrahedral intermediate(s) formed during glutamine hydrolysis. Inhibited by the product CTP, via allosteric rather than competitive inhibition. Its function is as follows. Catalyzes the ATP-dependent amination of UTP to CTP with either L-glutamine or ammonia as the source of nitrogen. Regulates intracellular CTP levels through interactions with the four ribonucleotide triphosphates. In Desulfitobacterium hafniense (strain Y51), this protein is CTP synthase.